A 221-amino-acid polypeptide reads, in one-letter code: Immediate early response gene 2 protein (221 aa).

Met1 is modified (N-acetylmethionine). The segment at 105–155 (ETPALCDPPPARVSRKRRSSSDLSDGSDAGLVPSKKARLEEVEGEATSEVP) is disordered. Low complexity predominate over residues 125 to 136 (SDLSDGSDAGLV).

This sequence belongs to the IER family.

Its subcellular location is the cytoplasm. The protein resides in the nucleus. In terms of biological role, DNA-binding protein that seems to act as a transcription factor. Involved in the regulation of neuronal differentiation, acts upon JNK-signaling pathway activation and plays a role in neurite outgrowth in hippocampal cells. May mediate with FIBP FGF-signaling in the establishment of laterality in the embryo. Promotes cell motility, seems to stimulate tumor metastasis. The sequence is that of Immediate early response gene 2 protein (Ier2) from Mus musculus (Mouse).